Consider the following 366-residue polypeptide: Isocitrate dehydrogenase [NAD] subunit alpha, mitochondrial (366 aa).

The transit peptide at M1–F27 directs the protein to the mitochondrion. An N6-succinyllysine modification is found at K77. Residue T101 is modified to Phosphothreonine. Residues R115, R125, and R146 each coordinate substrate. The residue at position 223 (K223) is an N6-acetyllysine. Residues D233, D257, and D261 each contribute to the Mg(2+) site. Position 343 is an N6-acetyllysine; alternate (K343). At K343 the chain carries N6-succinyllysine; alternate. K350 carries the N6-succinyllysine modification.

It belongs to the isocitrate and isopropylmalate dehydrogenases family. In terms of assembly, heterooligomer of subunits alpha (IDH3A), beta (IDH3B), and gamma (IDH3G) in the apparent ratio of 2:1:1. The heterodimer containing one IDH3A and one IDH3B subunit and the heterodimer containing one IDH3A and one IDH3G subunit assemble into a heterotetramer (which contains two subunits of IDH3A, one of IDH3B and one of IDH3G) and further into the heterooctamer. Requires Mg(2+) as cofactor. Mn(2+) serves as cofactor.

Its subcellular location is the mitochondrion. The catalysed reaction is D-threo-isocitrate + NAD(+) = 2-oxoglutarate + CO2 + NADH. Its activity is regulated as follows. The heterotetramer and the heterodimer composed of IDH3A and IDH3G subunits can be allosterically activated by citrate (CIT) or/and ADP, and the two activators can act independently or synergistically. The heterodimer composed of IDH3A and IDH3B subunits cannot be allosterically regulated and the allosteric regulation of the heterotetramer is through the IDH3G subunit and not the IDH3B subunit. The IDH3G subunit contains the allosteric site which consists of a CIT-binding site and an ADP-binding site, and the binding of CIT and ADP causes conformational changes at the allosteric site which are transmitted to the active site in the catalytic subunit (IDH3A) through a cascade of conformational changes at the heterodimer interface, leading to stabilization of the isocitrate-binding at the active site and thus activation of the enzyme. ATP can activate the heterotetramer and the heterodimer composed of IDH3A and IDH3G subunits at low concentrations but inhibits their activities at high concentrations, whereas ATP exhibits only inhibitory effect on the heterodimer composed of IDH3A and IDH3B subunits. In terms of biological role, catalytic subunit of the enzyme which catalyzes the decarboxylation of isocitrate (ICT) into alpha-ketoglutarate. The heterodimer composed of the alpha (IDH3A) and beta (IDH3B) subunits and the heterodimer composed of the alpha (IDH3A) and gamma (IDH3G) subunits, have considerable basal activity but the full activity of the heterotetramer (containing two subunits of IDH3A, one of IDH3B and one of IDH3G) requires the assembly and cooperative function of both heterodimers. The polypeptide is Isocitrate dehydrogenase [NAD] subunit alpha, mitochondrial (IDH3A) (Sus scrofa (Pig)).